A 276-amino-acid polypeptide reads, in one-letter code: UPF0276 protein AM1_3026 (276 aa).

It belongs to the UPF0276 family.

This chain is UPF0276 protein AM1_3026, found in Acaryochloris marina (strain MBIC 11017).